A 178-amino-acid chain; its full sequence is Transcription termination/antitermination protein NusG (178 aa).

A KOW domain is found at valine 126–valine 156.

Belongs to the NusG family.

Participates in transcription elongation, termination and antitermination. The protein is Transcription termination/antitermination protein NusG of Neisseria meningitidis serogroup B (strain ATCC BAA-335 / MC58).